Reading from the N-terminus, the 217-residue chain is Small ribosomal subunit protein uS3 (217 aa).

One can recognise a KH type-2 domain in the interval 40-110 (IRELVNKSFT…EVYINIHEVR (71 aa)).

Belongs to the universal ribosomal protein uS3 family. In terms of assembly, part of the 30S ribosomal subunit. Forms a tight complex with proteins S10 and S14.

Functionally, binds the lower part of the 30S subunit head. Binds mRNA in the 70S ribosome, positioning it for translation. The polypeptide is Small ribosomal subunit protein uS3 (Rickettsia bellii (strain OSU 85-389)).